The primary structure comprises 917 residues: MRLSSSSGSVLPAQAASPEAVEEQKCLNSELWHACAGPLVSLPAVGSRVVYFPQGHSEQVAASTNKEMESQIPNYPNLPPQLICQLHNVTMHADAETDEVYAQMTLQPLSPQELKDPYLPAELGSANKQPTNYFCKTLTASDTSTHGGFSVPRRAAEKVFPPLDFTQQPPAQELIAKDLHGNEWKFRHIFRGQPKRHLLTTGWSVFVSAKRLVAGDSVLFIWNDNNQLLLGIRRANRPQTVMPSSVLSSDSMHIGLLAAAAHAASTNSRFTIFYNPRASPSEFVIPLSKYVKAVYHTRISVGMRFRMLFETEESSVRRYMGTITGISDLDAARWPNSHWRSVKVGWDESTAGERQPRVSLWEIEPLTTFPMYPSPFPLRLKRPWPTGLPSLHGGKDDDLTSSLMWLRDSANPGFQSLNFGGLGMNPWMQPRFDASLLGLQPDMYQTIAATAFQDPTKQVSPTILQFQQPQNIGGRANTLLPSQILQQVQPQFQQQQYLQNINETTIQGHAQSEFLQQQLQRCQSFTEQKPQLQTQQQQQESQQQQQQQSQCMQVPQHQQMQQQKNMTNYQSVPNALSPFSQLSSPSQSSPMTLQTVLPFSQPQSYPDTSMSSLSPSNTSTMHNALRPFSSEAPSHLSMPRPTAVPVPDPWSSKRVAVESLLPSRPQVTSQMEQLDSTAPSIPQSSALAPLPGRGCLVDQDGNSDPQNHLLFGVNIDSQSLLMQGGIPSLQGENDSTAIPYSTSNFLSPSQNDFPLDQTLSSADCLDESGYVPCSQNSDQVINRPPATFVKVYKSGTYGRSLDITRFSSYHELRRELGRLFGLEGQLENPLRSGWQLVFVDREDDVLLVGDDPWQEFVNSVSCIKILSPQEVQQMGKPFELLSSAPGKRLGSSCDDYVSRQESRSLSTGIASVGSVEF.

The segment at residues 134–236 (FCKTLTASDT…QLLLGIRRAN (103 aa)) is a DNA-binding region (TF-B3). Residues 571–649 (SVPNALSPFS…RPTAVPVPDP (79 aa)) form a disordered region. 2 stretches are compositionally biased toward low complexity: residues 576–594 (LSPF…MTLQ) and 604–620 (SYPD…NTST). Residues 786-870 (ATFVKVYKSG…SCIKILSPQE (85 aa)) enclose the PB1 domain.

This sequence belongs to the ARF family. As to quaternary structure, homodimers and heterodimers. As to expression, expressed in roots, culms, leaves and young panicles.

Its subcellular location is the nucleus. Auxin response factors (ARFs) are transcriptional factors that bind specifically to the DNA sequence 5'-TGTCTC-3' found in the auxin-responsive promoter elements (AuxREs). The chain is Auxin response factor 17 (ARF17) from Oryza sativa subsp. japonica (Rice).